The sequence spans 302 residues: Proteasome subunit beta (302 aa).

Positions 1–10 are enriched in basic and acidic residues; that stretch reads MAGRVREVSH. The tract at residues 1 to 21 is disordered; that stretch reads MAGRVREVSHSSDQSGRLPAA. Residues 1-67 constitute a propeptide, removed in mature form; by autocatalysis; that stretch reads MAGRVREVSH…GPGAGEPPHA (67 aa). Thr68 acts as the Nucleophile in catalysis. The interval 283–302 is disordered; the sequence is RRGNPGGNPGISAVHGDGGN.

This sequence belongs to the peptidase T1B family. In terms of assembly, the 20S proteasome core is composed of 14 alpha and 14 beta subunits that assemble into four stacked heptameric rings, resulting in a barrel-shaped structure. The two inner rings, each composed of seven catalytic beta subunits, are sandwiched by two outer rings, each composed of seven alpha subunits. The catalytic chamber with the active sites is on the inside of the barrel. Has a gated structure, the ends of the cylinder being occluded by the N-termini of the alpha-subunits. Is capped by the proteasome-associated ATPase, ARC.

Its subcellular location is the cytoplasm. The catalysed reaction is Cleavage of peptide bonds with very broad specificity.. Its pathway is protein degradation; proteasomal Pup-dependent pathway. Its activity is regulated as follows. The formation of the proteasomal ATPase ARC-20S proteasome complex, likely via the docking of the C-termini of ARC into the intersubunit pockets in the alpha-rings, may trigger opening of the gate for substrate entry. Interconversion between the open-gate and close-gate conformations leads to a dynamic regulation of the 20S proteasome proteolysis activity. Functionally, component of the proteasome core, a large protease complex with broad specificity involved in protein degradation. In Kineococcus radiotolerans (strain ATCC BAA-149 / DSM 14245 / SRS30216), this protein is Proteasome subunit beta.